Consider the following 174-residue polypeptide: FITAAFGIPQISTGDMLRAAIKAGTPLGLEAKKIIDEGGLVRDDIIIGMVKERIAQDDCKNGFLFDGFPRTLAQAEAIVEAGVDLDAVVEIDVPDSVIVDRMSGRRVHLASGRTYHVTYNPPKVEGKDDVTGEDLIQRDDDKEETVKKRLAVYHEQTEVLVDFYSKLEGEHAPK.

The NMP stretch occupies residues 12-41; it reads STGDMLRAAIKAGTPLGLEAKKIIDEGGLV. Residues Thr-13, Arg-18, 39-41, 67-70, and Gln-74 contribute to the AMP site; these read GLV and GFPR. The segment at 104-141 is LID; it reads GRRVHLASGRTYHVTYNPPKVEGKDDVTGEDLIQRDDD. Residues Arg-105 and 114–115 each bind ATP; that span reads TY. AMP is bound by residues Arg-138 and Arg-149.

Belongs to the adenylate kinase family. In terms of assembly, monomer.

It localises to the cytoplasm. It carries out the reaction AMP + ATP = 2 ADP. The protein operates within purine metabolism; AMP biosynthesis via salvage pathway; AMP from ADP: step 1/1. Its function is as follows. Catalyzes the reversible transfer of the terminal phosphate group between ATP and AMP. Plays an important role in cellular energy homeostasis and in adenine nucleotide metabolism. In Neisseria flavescens, this protein is Adenylate kinase.